The sequence spans 377 residues: Gap junction gamma-1 protein (377 aa).

Topologically, residues 1 to 18 are cytoplasmic; that stretch reads MSWSFLTRLLEEINNHST. A helical transmembrane segment spans residues 19–39; that stretch reads FVGKVWLTVLIIFRIVLTAVG. Over 40–75 the chain is Extracellular; sequence GESIYYDEQSKFTCNTQQPGCENVCYDAFAPLSHVR. Residues 76–96 form a helical membrane-spanning segment; the sequence is FWVFQIILITTPSIMYLGFAM. Topologically, residues 97-174 are cytoplasmic; sequence HRIARQPEMQ…RRIKQDGLMK (78 aa). Positions 129–163 are disordered; that stretch reads DYEEAEDNQEEDPMICEEEEPEKDSEKGDKKKHDG. Over residues 131–151 the composition is skewed to acidic residues; the sequence is EEAEDNQEEDPMICEEEEPEK. A helical membrane pass occupies residues 175-197; that stretch reads VYVLQLLFRSVFEVGFLMGQYIL. At 198–228 the chain is on the extracellular side; the sequence is YGFEVIPFFVCSRKPCPHTVDCFVSRPTEKT. A helical membrane pass occupies residues 229–249; it reads IFLLIMYAVSALCLFLNLCEL. Residues 250–377 lie on the Cytoplasmic side of the membrane; that stretch reads FHLGIGGIRD…GVGNREKSGL (128 aa). 2 disordered regions span residues 265–294 and 334–377; these read KKELQESRKKTPSAPPNYHSVLKKGRLPNG and LNPT…KSGL. Residues 337–362 show a composition bias toward polar residues; sequence TGDNTHASRSSSPESNSIAAEQNRLN.

Belongs to the connexin family. Gamma-type subfamily. In terms of assembly, a connexon is composed of a hexamer of connexins.

Its subcellular location is the cell membrane. It localises to the cell junction. It is found in the gap junction. One gap junction consists of a cluster of closely packed pairs of transmembrane channels, the connexons, through which materials of low MW diffuse from one cell to a neighboring cell. The polypeptide is Gap junction gamma-1 protein (gjc1) (Xenopus tropicalis (Western clawed frog)).